Here is a 479-residue protein sequence, read N- to C-terminus: Anaerobic nitric oxide reductase flavorubredoxin (479 aa).

Positions 30-210 (LRGSSYNSYL…PFSRLVTPKI (181 aa)) are zinc metallo-hydrolase. Positions 79, 81, 83, 147, 166, and 227 each coordinate Fe cation. Positions 254–393 (ITIFYDTMSN…LCRQHGRDIA (140 aa)) constitute a Flavodoxin-like domain. FMN contacts are provided by residues 260 to 264 (TMSNN) and 342 to 369 (AFGSHGWSGGAVDRLSTRLQDAGFEMSL). Residues 423-474 (GPKMQCSVCQWIYDPALGEPLQDVAPGTPWSDVPDNFLCPECSLGKDVFDVL) form the Rubredoxin-like domain. Cys428, Cys431, Cys461, and Cys464 together coordinate Fe cation.

In the N-terminal section; belongs to the zinc metallo-hydrolase group 3 family. In terms of assembly, homotetramer. It depends on Fe cation as a cofactor. FMN serves as cofactor.

The protein localises to the cytoplasm. The protein operates within nitrogen metabolism; nitric oxide reduction. Functionally, anaerobic nitric oxide reductase; uses NADH to detoxify nitric oxide (NO), protecting several 4Fe-4S NO-sensitive enzymes. Has at least 2 reductase partners, only one of which (NorW, flavorubredoxin reductase) has been identified. NO probably binds to the di-iron center; electrons enter from the NorW at rubredoxin and are transferred sequentially to the FMN center and the di-iron center. Also able to function as an aerobic oxygen reductase. The polypeptide is Anaerobic nitric oxide reductase flavorubredoxin (Salmonella typhi).